The primary structure comprises 553 residues: Replication factor C large subunit (553 aa).

50-57 contributes to the ATP binding site; that stretch reads GGPGVGKT. Positions 438 to 553 are disordered; the sequence is GKRPGKPEAG…SKKQRTLFDF (116 aa). Basic and acidic residues predominate over residues 442–451; that stretch reads GKPEAGEPRE. The span at 503–513 shows a compositional bias: low complexity; that stretch reads EAPMAAAMPAA. The span at 532 to 553 shows a compositional bias: basic and acidic residues; sequence EPEKPPAAEDKCSKKQRTLFDF.

The protein belongs to the activator 1 small subunits family. RfcL subfamily. As to quaternary structure, heteromultimer composed of small subunits (RfcS) and large subunits (RfcL).

Its function is as follows. Part of the RFC clamp loader complex which loads the PCNA sliding clamp onto DNA. In Methanocella arvoryzae (strain DSM 22066 / NBRC 105507 / MRE50), this protein is Replication factor C large subunit.